The chain runs to 689 residues: MIRMTKRKILVTSALPYANAGLHLGHMLEQIQTDIWVRFQKMRGHECYYVCADDTHGAPIMLAAEKRGITPEQLVNEVRELHVADSQGFLIGHDNYYSTNSPENKALAEQVYLALKADDKIACRTIEQLFDPEKQMFLPDRFVKGECPKCSAKDQYGDNCEVCGATYAPTELKNPYSAVSGAKPVLKTSEHFFFRLGECADFLKAWTSGASRRADGAVQPHLQPESLNKMNEWIGGGLQDWDISRDAPYFGFEIPGAPGKYFYVWLDAPIGYMASFKNLCERLNLNFDEWFAKDSQTEMYHFIGKDILYFHALFWPAMLNYSGLRAPTGVFAHGFLTVDGQKMSKSRGTFIQAKSYLDCGLNPEWMRYYIAAKLNGRIEDIDLNLNDFVARVNSDLVGKFVNIASRSAGFIAKRFDGMLAAQVSDGEILAKLQAAAEELAAAYEAREYAKALRDVMALADIVNGYVDANKPWELAKQEGQDARLQDVCTVLVNAFRLLAIYLKPVLPKLAEGVEAFLDVAPLSWHDAETLLLGKKINAYQHLMQRIDPALIDKLIEANKQNMQAIQDAPAAAAHEPLAETIKIDDFAKVDLRVGKVLECNFVEGSDKLLQFKVDLGFETRNIFSGIRKAYQEPEKLVGRHVIVVANLAERKMRFGVSQGMIVCASGVDDSEGLFLLDVDAGVKPGMRVG.

Positions 16–26 (PYANAGLHLGH) match the 'HIGH' region motif. 4 residues coordinate Zn(2+): Cys-147, Cys-150, Cys-160, and Cys-163. The 'KMSKS' region motif lies at 342–346 (KMSKS). Lys-345 is an ATP binding site. Residues 585 to 689 (DFAKVDLRVG…AGVKPGMRVG (105 aa)) enclose the tRNA-binding domain.

The protein belongs to the class-I aminoacyl-tRNA synthetase family. MetG type 1 subfamily. As to quaternary structure, homodimer. It depends on Zn(2+) as a cofactor.

The protein resides in the cytoplasm. It catalyses the reaction tRNA(Met) + L-methionine + ATP = L-methionyl-tRNA(Met) + AMP + diphosphate. Functionally, is required not only for elongation of protein synthesis but also for the initiation of all mRNA translation through initiator tRNA(fMet) aminoacylation. This chain is Methionine--tRNA ligase, found in Chromobacterium violaceum (strain ATCC 12472 / DSM 30191 / JCM 1249 / CCUG 213 / NBRC 12614 / NCIMB 9131 / NCTC 9757 / MK).